Here is a 516-residue protein sequence, read N- to C-terminus: Na(+)/H(+) antiporter NhaB (516 aa).

12 consecutive transmembrane segments (helical) span residues 23-43 (LALI…PFVA), 61-80 (CYPL…IGMT), 97-117 (LLLI…LFVF), 120-140 (LLLG…AAAF), 144-164 (FLDA…FYGI), 202-222 (LMMH…VGEP), 238-258 (FFIR…LTCL), 303-323 (AVIG…VGLI), 348-368 (TEAL…AVII), 391-411 (LFYL…VGTV), 447-467 (ATPN…APLI), and 475-495 (VWMA…CVEF).

The protein belongs to the NhaB Na(+)/H(+) (TC 2.A.34) antiporter family.

The protein resides in the cell inner membrane. The catalysed reaction is 2 Na(+)(in) + 3 H(+)(out) = 2 Na(+)(out) + 3 H(+)(in). In terms of biological role, na(+)/H(+) antiporter that extrudes sodium in exchange for external protons. This Klebsiella pneumoniae (strain 342) protein is Na(+)/H(+) antiporter NhaB.